The primary structure comprises 126 residues: Small ribosomal subunit protein uS13 (126 aa).

A disordered region spans residues 95–126; the sequence is GLPVRGQQTRTNARTRKGKRKTVGGTKKAKAK. Over residues 107 to 126 the composition is skewed to basic residues; sequence ARTRKGKRKTVGGTKKAKAK.

It belongs to the universal ribosomal protein uS13 family. In terms of assembly, part of the 30S ribosomal subunit. Forms a loose heterodimer with protein S19. Forms two bridges to the 50S subunit in the 70S ribosome.

Located at the top of the head of the 30S subunit, it contacts several helices of the 16S rRNA. In the 70S ribosome it contacts the 23S rRNA (bridge B1a) and protein L5 of the 50S subunit (bridge B1b), connecting the 2 subunits; these bridges are implicated in subunit movement. Contacts the tRNAs in the A and P-sites. This Aquifex aeolicus (strain VF5) protein is Small ribosomal subunit protein uS13.